Here is an 857-residue protein sequence, read N- to C-terminus: Dimethylglycine dehydrogenase, mitochondrial (857 aa).

The transit peptide at 1-43 (MLRLGALRLRGLALRSSQGRPSSAGLREGQESPPSPPEWKDRA) directs the protein to the mitochondrion. Residues 15 to 39 (RSSQGRPSSAGLREGQESPPSPPEW) form a disordered region. FAD contacts are provided by residues 52–53 (CV), 73–74 (EK), and 80–88 (GSTWHAAGL). H84 bears the Tele-8alpha-FAD histidine mark. Position 107 is an N6-acetyllysine (K107). Residue K141 is modified to N6-acetyllysine; alternate. K141 is subject to N6-succinyllysine; alternate. At K161 the chain carries N6-acetyllysine. FAD is bound at residue V212. Residue K216 is modified to N6-acetyllysine. FAD is bound at residue W244. N6-succinyllysine occurs at positions 310 and 312. An N6-acetyllysine mark is found at K328 and K353. 390-395 (FGYGII) is a binding site for FAD. N6-acetyllysine; alternate occurs at positions 427, 469, and 516. K427, K469, and K516 each carry N6-succinyllysine; alternate. Residue 573–575 (ELT) coordinates (6S)-5,6,7,8-tetrahydrofolate. Residue K648 is modified to N6-acetyllysine; alternate. K648 is subject to N6-succinyllysine; alternate. Residues Y669, 676–678 (ELY), and Y737 contribute to the (6S)-5,6,7,8-tetrahydrofolate site. The residue at position 757 (K757) is an N6-acetyllysine. The residue at position 786 (K786) is an N6-acetyllysine; alternate. Position 786 is an N6-succinyllysine; alternate (K786). K788 carries the post-translational modification N6-succinyllysine.

It belongs to the GcvT family. FAD is required as a cofactor.

It is found in the mitochondrion. It carries out the reaction (6S)-5,6,7,8-tetrahydrofolyl-(gamma-L-Glu)(n) + N,N-dimethylglycine + oxidized [electron-transfer flavoprotein] + H(+) = (6R)-5,10-methylenetetrahydrofolyl-(gamma-L-Glu)(n) + sarcosine + reduced [electron-transfer flavoprotein]. It functions in the pathway amine and polyamine degradation; betaine degradation; sarcosine from betaine: step 2/2. Its function is as follows. Catalyzes the demethylation of N,N-dimethylglycine to sarcosine. Also has activity with sarcosine in vitro. The protein is Dimethylglycine dehydrogenase, mitochondrial (Dmgdh) of Rattus norvegicus (Rat).